The primary structure comprises 969 residues: Endogenous retrovirus group K member 11 Pol protein (969 aa).

The Reverse transcriptase domain maps to 57–245 (LEKGHIEPSF…TPFHYLGMQI (189 aa)). Residues 161–164 (LPQG) carry the LPQG motif. The region spanning 460–590 (LENALTVFTD…ADLLVSSALI (131 aa)) is the RNase H type-1 domain. Mg(2+) is bound by residues Asp-469, Glu-497, Asp-517, and Asp-582. Residues 587–628 (SALIKAQELHALTHVNAAGLKNKFDVTWKQAKDIVQHCTQCQ) form an Integrase-type zinc finger. Zn(2+) contacts are provided by His-596, His-600, Cys-624, and Cys-627. The Integrase catalytic domain occupies 642–803 (RGLCPNALWQ…TSAEQHLTGK (162 aa)). The integrase-type DNA-binding region spans 811-859 (KLIWWKDNKNKTWEIGKVITWGRGFACVSPGENQLPVWIPTRHLKFYNE).

Belongs to the beta type-B retroviral polymerase family. HERV class-II K(HML-2) pol subfamily.

It catalyses the reaction DNA(n) + a 2'-deoxyribonucleoside 5'-triphosphate = DNA(n+1) + diphosphate. It carries out the reaction Endonucleolytic cleavage to 5'-phosphomonoester.. Functionally, early post-infection, the reverse transcriptase converts the viral RNA genome into double-stranded viral DNA. The RNase H domain of the reverse transcriptase performs two functions. It degrades the RNA template and specifically removes the RNA primer from the RNA/DNA hybrid. Following nuclear import, the integrase catalyzes the insertion of the linear, double-stranded viral DNA into the host cell chromosome. Endogenous Pol proteins may have kept, lost or modified their original function during evolution. The polypeptide is Endogenous retrovirus group K member 11 Pol protein (ERVK-11) (Homo sapiens (Human)).